Reading from the N-terminus, the 154-residue chain is Prefoldin subunit 5 (154 aa).

Position 2 is an N-acetylalanine (A2). N6-acetyllysine is present on K42. At S56 the chain carries Phosphoserine.

This sequence belongs to the prefoldin subunit alpha family. Heterohexamer of two PFD-alpha type and four PFD-beta type subunits.

It is found in the nucleus. Functionally, binds specifically to cytosolic chaperonin (c-CPN) and transfers target proteins to it. Binds to nascent polypeptide chain and promotes folding in an environment in which there are many competing pathways for nonnative proteins. Represses the transcriptional activity of MYC. This is Prefoldin subunit 5 (PFDN5) from Pongo abelii (Sumatran orangutan).